We begin with the raw amino-acid sequence, 118 residues long: Beta-2-microglobulin (118 aa).

A signal peptide spans 1–21 (MGSRWGIAVLGLFCFVSCLEA). In terms of domain architecture, Ig-like C1-type spans 26 to 113 (PKIQVYSRHP…VHEGVKKTVK (88 aa)). A disulfide bridge connects residues cysteine 46 and cysteine 101.

It belongs to the beta-2-microglobulin family. As to quaternary structure, heterodimer of an alpha chain and a beta chain. Beta-2-microglobulin is the beta-chain of major histocompatibility complex class I molecules.

The protein resides in the secreted. Its function is as follows. Component of the class I major histocompatibility complex (MHC). Involved in the presentation of peptide antigens to the immune system. In Ornithorhynchus anatinus (Duckbill platypus), this protein is Beta-2-microglobulin (B2M).